The following is a 475-amino-acid chain: Na(+)/H(+) antiporter NhaA 2 (475 aa).

A run of 12 helical transmembrane segments spans residues 44–64 (AQATASVFLLVATITALWWAN), 92–112 (LKHIINDGLMVIFFFFIGLEI), 130–150 (LILCALGGMICPAVIYSLFNW), 156–176 (IGWGIPMATDTAFALGALTLV), 186–206 (AFLVGLAIVDDVGAIVVIALF), 211–231 (ISVIFLSISFSLIAFLAIANY), 232–252 (AGVLRPIFYILIGIAAWWTML), 255–275 (GVHPTFAGVAIALTVPARPML), 331–351 (ALDLPVSLFVLPLFALVNAGV), 368–388 (LGIVIGLVIGKFVGISGACWL), 406–426 (VIGMSLIAGIGFTMSTFIATL), and 442–462 (ILFASLLSAILGLLYLRIIAA).

The protein belongs to the NhaA Na(+)/H(+) (TC 2.A.33) antiporter family.

The protein localises to the cell inner membrane. It catalyses the reaction Na(+)(in) + 2 H(+)(out) = Na(+)(out) + 2 H(+)(in). Its function is as follows. Na(+)/H(+) antiporter that extrudes sodium in exchange for external protons. The chain is Na(+)/H(+) antiporter NhaA 2 from Psychromonas ingrahamii (strain DSM 17664 / CCUG 51855 / 37).